A 128-amino-acid chain; its full sequence is 3-aminoacrylate deaminase RutC (128 aa).

Belongs to the RutC family.

The enzyme catalyses (Z)-3-aminoacrylate + H2O + H(+) = 3-oxopropanoate + NH4(+). Its function is as follows. Involved in pyrimidine catabolism. Catalyzes the deamination of 3-aminoacrylate to malonic semialdehyde, a reaction that can also occur spontaneously. RutC may facilitate the reaction and modulate the metabolic fitness, rather than catalyzing essential functions. The protein is 3-aminoacrylate deaminase RutC of Azorhizobium caulinodans (strain ATCC 43989 / DSM 5975 / JCM 20966 / LMG 6465 / NBRC 14845 / NCIMB 13405 / ORS 571).